The sequence spans 541 residues: Chaperonin GroEL 2 (541 aa).

Residues 29–32 (TLGP), 86–90 (DGTTT), G413, 476–478 (NAA), and D492 contribute to the ATP site.

It belongs to the chaperonin (HSP60) family. As to quaternary structure, forms a cylinder of 14 subunits composed of two heptameric rings stacked back-to-back. Interacts with the co-chaperonin GroES.

The protein localises to the secreted. It localises to the capsule. It is found in the cell surface. The protein resides in the cell wall. It catalyses the reaction ATP + H2O + a folded polypeptide = ADP + phosphate + an unfolded polypeptide.. Together with its co-chaperonin GroES, plays an essential role in assisting protein folding. The GroEL-GroES system forms a nano-cage that allows encapsulation of the non-native substrate proteins and provides a physical environment optimized to promote and accelerate protein folding. The polypeptide is Chaperonin GroEL 2 (Mycolicibacterium paratuberculosis (strain ATCC BAA-968 / K-10) (Mycobacterium paratuberculosis)).